A 385-amino-acid chain; its full sequence is 1-deoxy-D-xylulose 5-phosphate reductoisomerase (385 aa).

Positions 10, 11, 12, 13, and 124 each coordinate NADPH. K125 is a 1-deoxy-D-xylulose 5-phosphate binding site. E126 serves as a coordination point for NADPH. Position 150 (D150) interacts with Mn(2+). S151, E152, S176, and H199 together coordinate 1-deoxy-D-xylulose 5-phosphate. E152 contributes to the Mn(2+) binding site. Residue G205 coordinates NADPH. Positions 212, 217, 218, and 221 each coordinate 1-deoxy-D-xylulose 5-phosphate. E221 lines the Mn(2+) pocket.

The protein belongs to the DXR family. The cofactor is Mg(2+). Mn(2+) serves as cofactor.

The catalysed reaction is 2-C-methyl-D-erythritol 4-phosphate + NADP(+) = 1-deoxy-D-xylulose 5-phosphate + NADPH + H(+). It functions in the pathway isoprenoid biosynthesis; isopentenyl diphosphate biosynthesis via DXP pathway; isopentenyl diphosphate from 1-deoxy-D-xylulose 5-phosphate: step 1/6. Functionally, catalyzes the NADPH-dependent rearrangement and reduction of 1-deoxy-D-xylulose-5-phosphate (DXP) to 2-C-methyl-D-erythritol 4-phosphate (MEP). This is 1-deoxy-D-xylulose 5-phosphate reductoisomerase from Clostridium kluyveri (strain NBRC 12016).